The sequence spans 303 residues: Nucleotide-binding protein SAB0719 (303 aa).

18-25 (GLSGAGKS) serves as a coordination point for ATP. 69–72 (DLRG) contacts GTP.

This sequence belongs to the RapZ-like family.

Its function is as follows. Displays ATPase and GTPase activities. This Staphylococcus aureus (strain bovine RF122 / ET3-1) protein is Nucleotide-binding protein SAB0719.